Reading from the N-terminus, the 312-residue chain is Tyrosine recombinase XerC (312 aa).

A Core-binding (CB) domain is found at 10–101 (PDLQAARESW…GIRSLLRFLE (92 aa)). Residues 122 to 306 (SLPKPLTASD…DTARLLEIYE (185 aa)) enclose the Tyr recombinase domain. Catalysis depends on residues Arg165, Lys190, His258, Arg261, and His284. Residue Tyr293 is the O-(3'-phospho-DNA)-tyrosine intermediate of the active site.

Belongs to the 'phage' integrase family. XerC subfamily. As to quaternary structure, forms a cyclic heterotetrameric complex composed of two molecules of XerC and two molecules of XerD.

The protein localises to the cytoplasm. Site-specific tyrosine recombinase, which acts by catalyzing the cutting and rejoining of the recombining DNA molecules. The XerC-XerD complex is essential to convert dimers of the bacterial chromosome into monomers to permit their segregation at cell division. It also contributes to the segregational stability of plasmids. The protein is Tyrosine recombinase XerC of Mesorhizobium japonicum (strain LMG 29417 / CECT 9101 / MAFF 303099) (Mesorhizobium loti (strain MAFF 303099)).